A 669-amino-acid chain; its full sequence is DNA ligase (669 aa).

35–39 (DFEYD) is an NAD(+) binding site. The interval 52-71 (YPEWDSPDSPTHRVGSDKTE) is disordered. The segment covering 61 to 71 (PTHRVGSDKTE) has biased composition (basic and acidic residues). NAD(+) contacts are provided by residues 84–85 (SL) and glutamate 115. Lysine 117 (N6-AMP-lysine intermediate) is an active-site residue. NAD(+) contacts are provided by arginine 138, glutamate 175, lysine 290, and lysine 314. 4 residues coordinate Zn(2+): cysteine 408, cysteine 411, cysteine 426, and cysteine 432. Residues 590–669 (PVSARLAGKT…EEEFLRLIEE (80 aa)) form the BRCT domain.

Belongs to the NAD-dependent DNA ligase family. LigA subfamily. Mg(2+) is required as a cofactor. The cofactor is Mn(2+).

The catalysed reaction is NAD(+) + (deoxyribonucleotide)n-3'-hydroxyl + 5'-phospho-(deoxyribonucleotide)m = (deoxyribonucleotide)n+m + AMP + beta-nicotinamide D-nucleotide.. DNA ligase that catalyzes the formation of phosphodiester linkages between 5'-phosphoryl and 3'-hydroxyl groups in double-stranded DNA using NAD as a coenzyme and as the energy source for the reaction. It is essential for DNA replication and repair of damaged DNA. This Porphyromonas gingivalis (strain ATCC 33277 / DSM 20709 / CIP 103683 / JCM 12257 / NCTC 11834 / 2561) protein is DNA ligase.